A 316-amino-acid polypeptide reads, in one-letter code: 4-hydroxy-3-methylbut-2-enyl diphosphate reductase (316 aa).

Cysteine 12 contributes to the [4Fe-4S] cluster binding site. (2E)-4-hydroxy-3-methylbut-2-enyl diphosphate is bound by residues histidine 43 and histidine 81. Histidine 43 and histidine 81 together coordinate dimethylallyl diphosphate. Residues histidine 43 and histidine 81 each contribute to the isopentenyl diphosphate site. Cysteine 103 contacts [4Fe-4S] cluster. Residue histidine 131 participates in (2E)-4-hydroxy-3-methylbut-2-enyl diphosphate binding. Histidine 131 contributes to the dimethylallyl diphosphate binding site. Histidine 131 lines the isopentenyl diphosphate pocket. Glutamate 133 serves as the catalytic Proton donor. Threonine 170 contributes to the (2E)-4-hydroxy-3-methylbut-2-enyl diphosphate binding site. Position 198 (cysteine 198) interacts with [4Fe-4S] cluster. 3 residues coordinate (2E)-4-hydroxy-3-methylbut-2-enyl diphosphate: serine 226, asparagine 228, and serine 271. Residues serine 226, asparagine 228, and serine 271 each coordinate dimethylallyl diphosphate. Isopentenyl diphosphate is bound by residues serine 226, asparagine 228, and serine 271.

This sequence belongs to the IspH family. [4Fe-4S] cluster is required as a cofactor.

The catalysed reaction is isopentenyl diphosphate + 2 oxidized [2Fe-2S]-[ferredoxin] + H2O = (2E)-4-hydroxy-3-methylbut-2-enyl diphosphate + 2 reduced [2Fe-2S]-[ferredoxin] + 2 H(+). The enzyme catalyses dimethylallyl diphosphate + 2 oxidized [2Fe-2S]-[ferredoxin] + H2O = (2E)-4-hydroxy-3-methylbut-2-enyl diphosphate + 2 reduced [2Fe-2S]-[ferredoxin] + 2 H(+). It functions in the pathway isoprenoid biosynthesis; dimethylallyl diphosphate biosynthesis; dimethylallyl diphosphate from (2E)-4-hydroxy-3-methylbutenyl diphosphate: step 1/1. The protein operates within isoprenoid biosynthesis; isopentenyl diphosphate biosynthesis via DXP pathway; isopentenyl diphosphate from 1-deoxy-D-xylulose 5-phosphate: step 6/6. In terms of biological role, catalyzes the conversion of 1-hydroxy-2-methyl-2-(E)-butenyl 4-diphosphate (HMBPP) into a mixture of isopentenyl diphosphate (IPP) and dimethylallyl diphosphate (DMAPP). Acts in the terminal step of the DOXP/MEP pathway for isoprenoid precursor biosynthesis. This Bacillus mycoides (strain KBAB4) (Bacillus weihenstephanensis) protein is 4-hydroxy-3-methylbut-2-enyl diphosphate reductase.